A 157-amino-acid chain; its full sequence is 6,7-dimethyl-8-ribityllumazine synthase 2 (157 aa).

Residues Trp-21, 55 to 57, and 79 to 81 each bind 5-amino-6-(D-ribitylamino)uracil; these read AYE and FVV. Arg-87 serves as the catalytic Proton donor. Position 112 (Ser-112) interacts with 5-amino-6-(D-ribitylamino)uracil. Residue His-126 participates in (2S)-2-hydroxy-3-oxobutyl phosphate binding.

It belongs to the DMRL synthase family. In terms of assembly, homodecamer, arranged as a dimer of pentamers.

The enzyme catalyses (2S)-2-hydroxy-3-oxobutyl phosphate + 5-amino-6-(D-ribitylamino)uracil = 6,7-dimethyl-8-(1-D-ribityl)lumazine + phosphate + 2 H2O + H(+). Its pathway is cofactor biosynthesis; riboflavin biosynthesis; riboflavin from 2-hydroxy-3-oxobutyl phosphate and 5-amino-6-(D-ribitylamino)uracil: step 1/2. In terms of biological role, catalyzes the formation of 6,7-dimethyl-8-ribityllumazine by condensation of 5-amino-6-(D-ribitylamino)uracil with 3,4-dihydroxy-2-butanone 4-phosphate. This is the penultimate step in the biosynthesis of riboflavin. In Mesorhizobium japonicum (strain LMG 29417 / CECT 9101 / MAFF 303099) (Mesorhizobium loti (strain MAFF 303099)), this protein is 6,7-dimethyl-8-ribityllumazine synthase 2 (ribH2).